Here is a 158-residue protein sequence, read N- to C-terminus: UPF0336 protein Mb0654 (158 aa).

It belongs to the UPF0336 family.

The polypeptide is UPF0336 protein Mb0654 (Mycobacterium bovis (strain ATCC BAA-935 / AF2122/97)).